A 197-amino-acid polypeptide reads, in one-letter code: Signal peptidase complex catalytic subunit SEC11 (197 aa).

At 1-14 (MLSSLAPYMANPRQ) the chain is on the cytoplasmic side. Residues 15–33 (TLTQVLNFALVLSTAFMLW) form a helical; Signal-anchor for type II membrane protein membrane-spanning segment. The Lumenal portion of the chain corresponds to 34–197 (KGLSVITNST…MGLMVVLQRE (164 aa)). An N-linked (GlcNAc...) asparagine glycan is attached at Asn41. Catalysis depends on charge relay system residues Ser53 and His92. Residues 102-115 (PGREDKKNVKKGGE) show a composition bias toward basic and acidic residues. The tract at residues 102-134 (PGREDKKNVKKGGEEGEETSSTPSQKLLTKGDN) is disordered. The active-site Charge relay system is Asp139. The tract at residues 183-194 (VLLGFMGLMVVL) is C-terminal short (CTS) helix.

Belongs to the peptidase S26B family. In terms of assembly, component of the signal peptidase complex (SPC) composed of a catalytic subunit SEC11 and three accessory subunits SPC1, SPC2 and SPC3. The complex induces a local thinning of the ER membrane which is used to measure the length of the signal peptide (SP) h-region of protein substrates. This ensures the selectivity of the complex towards h-regions shorter than 18-20 amino acids. SPC associates with the translocon complex.

The protein resides in the endoplasmic reticulum membrane. The catalysed reaction is Cleavage of hydrophobic, N-terminal signal or leader sequences from secreted and periplasmic proteins.. Functionally, catalytic component of the signal peptidase complex (SPC) which catalyzes the cleavage of N-terminal signal sequences from nascent proteins as they are translocated into the lumen of the endoplasmic reticulum. Specifically cleaves N-terminal signal peptides that contain a hydrophobic alpha-helix (h-region) shorter than 18-20 amino acids. In Paracoccidioides brasiliensis (strain Pb18), this protein is Signal peptidase complex catalytic subunit SEC11 (SEC11).